A 495-amino-acid polypeptide reads, in one-letter code: Putative aldehyde dehydrogenase DhaS (495 aa).

244 to 249 (GSTEIG) provides a ligand contact to NAD(+). Residues Glu-266 and Cys-300 contribute to the active site.

This sequence belongs to the aldehyde dehydrogenase family.

The enzyme catalyses an aldehyde + NAD(+) + H2O = a carboxylate + NADH + 2 H(+). This chain is Putative aldehyde dehydrogenase DhaS (dhaS), found in Bacillus subtilis (strain 168).